The chain runs to 76 residues: Acyl carrier protein (76 aa).

The Carrier domain maps to 2–76 (SSIFDKVKAI…SAVEYIKENQ (75 aa)). Serine 36 is subject to O-(pantetheine 4'-phosphoryl)serine.

This sequence belongs to the acyl carrier protein (ACP) family. 4'-phosphopantetheine is transferred from CoA to a specific serine of apo-ACP by AcpS. This modification is essential for activity because fatty acids are bound in thioester linkage to the sulfhydryl of the prosthetic group.

It localises to the cytoplasm. It participates in lipid metabolism; fatty acid biosynthesis. In terms of biological role, carrier of the growing fatty acid chain in fatty acid biosynthesis. This chain is Acyl carrier protein, found in Heliobacterium modesticaldum (strain ATCC 51547 / Ice1).